We begin with the raw amino-acid sequence, 359 residues long: Molybdenum import ATP-binding protein ModC (359 aa).

The ABC transporter domain maps to 1–233 (MSGLTVSIRG…IDAESEGGGV (233 aa)). Residue 32 to 39 (GHSGAGKT) coordinates ATP. The region spanning 289-355 (AISIRNLLPV…VKAVSVDRAA (67 aa)) is the Mop domain.

This sequence belongs to the ABC transporter superfamily. Molybdate importer (TC 3.A.1.8) family. In terms of assembly, the complex is composed of two ATP-binding proteins (ModC), two transmembrane proteins (ModB) and a solute-binding protein (ModA).

Its subcellular location is the cell inner membrane. The catalysed reaction is molybdate(out) + ATP + H2O = molybdate(in) + ADP + phosphate + H(+). Functionally, part of the ABC transporter complex ModABC involved in molybdenum import. Responsible for energy coupling to the transport system. The sequence is that of Molybdenum import ATP-binding protein ModC from Brucella abortus (strain 2308).